A 188-amino-acid polypeptide reads, in one-letter code: Ribosome-recycling factor (188 aa).

Belongs to the RRF family.

The protein localises to the cytoplasm. Its function is as follows. Responsible for the release of ribosomes from messenger RNA at the termination of protein biosynthesis. May increase the efficiency of translation by recycling ribosomes from one round of translation to another. The sequence is that of Ribosome-recycling factor from Bradyrhizobium diazoefficiens (strain JCM 10833 / BCRC 13528 / IAM 13628 / NBRC 14792 / USDA 110).